The sequence spans 197 residues: Cell division protein SepF (197 aa).

A disordered region spans residues Glu15–Ser89. Positions Pro22–Arg42 are enriched in basic and acidic residues. Polar residues predominate over residues Asn43–Thr73. Positions Arg80–Ser89 are enriched in low complexity.

The protein belongs to the SepF family. As to quaternary structure, homodimer. Interacts with FtsZ.

The protein resides in the cytoplasm. Functionally, cell division protein that is part of the divisome complex and is recruited early to the Z-ring. Probably stimulates Z-ring formation, perhaps through the cross-linking of FtsZ protofilaments. Its function overlaps with FtsA. The sequence is that of Cell division protein SepF from Staphylococcus epidermidis (strain ATCC 35984 / DSM 28319 / BCRC 17069 / CCUG 31568 / BM 3577 / RP62A).